A 308-amino-acid polypeptide reads, in one-letter code: Testis-expressed protein 52 (308 aa).

As to expression, expressed in Testis.

The chain is Testis-expressed protein 52 from Mus musculus (Mouse).